Reading from the N-terminus, the 920-residue chain is Disintegrin and metalloproteinase domain-containing protein 19 (920 aa).

The signal sequence occupies residues 1–26 (MPGRAGVARFCLLALALQLHWPLAAC). The propeptide occupies 27-204 (EPGWTTRGSQ…TKKQPRRMKR (178 aa)). At 27–703 (EPGWTTRGSQ…VDSGPLPPKS (677 aa)) the chain is on the extracellular side. The Cysteine switch signature appears at 131-138 (STCRGIRG). C133 is a binding site for Zn(2+). N-linked (GlcNAc...) asparagine glycosylation is present at N145. The 199-residue stretch at 211–409 (KYVELYLVAD…GGGMCLSNMP (199 aa)) folds into the Peptidase M12B domain. Intrachain disulfides connect C321-C404, C361-C388, and C362-C371. H346 is a Zn(2+) binding site. Residue E347 is part of the active site. Zn(2+)-binding residues include H350 and H356. The Disintegrin domain maps to 417 to 503 (GRRCGNGYLE…HCPTNYYQMD (87 aa)). 2 N-linked (GlcNAc...) asparagine glycosylation sites follow: N445 and N448. Residues C475 and C495 are joined by a disulfide bond. N649 carries an N-linked (GlcNAc...) asparagine glycan. Residues 654–686 (ETEGCGKKCNGHGVCNNNKNCHCFPGWSPPFCN) enclose the EGF-like domain. Disulfide bonds link C658-C668, C662-C674, and C676-C685. A helical transmembrane segment spans residues 704–724 (VGPVIAGVFSALFVLAVLVLL). Over 725 to 920 (CHCYRQSHKL…RVGAIISSKI (196 aa)) the chain is Cytoplasmic. The tract at residues 755–920 (SQSGGTGHAN…RVGAIISSKI (166 aa)) is disordered. Over residues 767 to 783 (FKLQTPQGKRKVTNTPE) the composition is skewed to polar residues. Positions 825-834 (ARIERKESAR) are enriched in basic and acidic residues. Residues 835 to 846 (RPPPSRPMPPAP) carry the SH3-binding motif. Pro residues-rich tracts occupy residues 835-846 (RPPPSRPMPPAP) and 888-903 (TSGP…PVPK).

Interacts with SH3PXD2A. The cofactor is Zn(2+). In terms of processing, the precursor is cleaved by a furin endopeptidase. Widely expressed, with the highest expression in bone, heart and lung, followed by brain and spleen and relatively low expression in liver, skeletal muscle, kidney and testis. In bone, primarily expressed in cell of the osteoblast lineage and not detected in mature osteoclasts.

It is found in the membrane. Participates in the proteolytic processing of beta-type neuregulin isoforms which are involved in neurogenesis and synaptogenesis, suggesting a regulatory role in glial cell. Also cleaves alpha-2 macroglobulin. May be involved in osteoblast differentiation and/or osteoblast activity in bone. This Mus musculus (Mouse) protein is Disintegrin and metalloproteinase domain-containing protein 19 (Adam19).